The following is a 282-amino-acid chain: Elongation factor Ts (282 aa).

Residues T80–V83 are involved in Mg(2+) ion dislocation from EF-Tu.

It belongs to the EF-Ts family.

The protein localises to the cytoplasm. Its function is as follows. Associates with the EF-Tu.GDP complex and induces the exchange of GDP to GTP. It remains bound to the aminoacyl-tRNA.EF-Tu.GTP complex up to the GTP hydrolysis stage on the ribosome. In Chlamydia trachomatis serovar L2b (strain UCH-1/proctitis), this protein is Elongation factor Ts.